The primary structure comprises 109 residues: Phosphoribosyl-AMP cyclohydrolase (109 aa).

Aspartate 80 is a binding site for Mg(2+). Position 81 (cysteine 81) interacts with Zn(2+). Mg(2+)-binding residues include aspartate 82 and aspartate 84. Residues cysteine 97 and cysteine 104 each contribute to the Zn(2+) site.

It belongs to the PRA-CH family. As to quaternary structure, homodimer. Mg(2+) is required as a cofactor. Zn(2+) serves as cofactor.

The protein localises to the cytoplasm. The catalysed reaction is 1-(5-phospho-beta-D-ribosyl)-5'-AMP + H2O = 1-(5-phospho-beta-D-ribosyl)-5-[(5-phospho-beta-D-ribosylamino)methylideneamino]imidazole-4-carboxamide. It functions in the pathway amino-acid biosynthesis; L-histidine biosynthesis; L-histidine from 5-phospho-alpha-D-ribose 1-diphosphate: step 3/9. Functionally, catalyzes the hydrolysis of the adenine ring of phosphoribosyl-AMP. This chain is Phosphoribosyl-AMP cyclohydrolase, found in Clostridium botulinum (strain Alaska E43 / Type E3).